Reading from the N-terminus, the 107-residue chain is Large ribosomal subunit protein uL23 (107 aa).

It belongs to the universal ribosomal protein uL23 family. In terms of assembly, part of the 50S ribosomal subunit. Contacts protein L29, and trigger factor when it is bound to the ribosome.

One of the early assembly proteins it binds 23S rRNA. One of the proteins that surrounds the polypeptide exit tunnel on the outside of the ribosome. Forms the main docking site for trigger factor binding to the ribosome. This Gluconobacter oxydans (strain 621H) (Gluconobacter suboxydans) protein is Large ribosomal subunit protein uL23.